We begin with the raw amino-acid sequence, 206 residues long: Sclerostin domain-containing protein 1 (206 aa).

The first 22 residues, 1–22 (MLLSAIHFYGLLLACTFTRSYS), serve as a signal peptide directing secretion. The tract at residues 40–68 (APASPSSNSTLNQARNGGRHYAGTGSDRN) is disordered. Over residues 43-54 (SPSSNSTLNQAR) the composition is skewed to polar residues. Asparagine 47 carries an N-linked (GlcNAc...) asparagine glycan. 4 disulfide bridges follow: cysteine 75-cysteine 133, cysteine 89-cysteine 147, cysteine 100-cysteine 163, and cysteine 104-cysteine 165. The 96-residue stretch at 75–170 (CRELRSTKYI…TACKCKRYTR (96 aa)) folds into the CTCK domain. N-linked (GlcNAc...) asparagine glycosylation occurs at asparagine 173. Residues 176 to 206 (SHNFEGTSQAKPVQHHKERKRASKSSKHSTS) form a disordered region. The segment covering 188–206 (VQHHKERKRASKSSKHSTS) has biased composition (basic residues).

The protein belongs to the sclerostin family. As to quaternary structure, interacts with LRP6.

It is found in the secreted. In terms of biological role, can activate or inhibit Wnt signaling in a context-dependent manner. Activates the canonical Wnt pathway whereby acts through Disheveled proteins and beta-catenin. Antagonises Wnt signaling through the canonical pathways presumably by blocking accessibility of certain WNTs to their receptors. Induces posterior neural markers via components of the canonical Wnt pathway. The protein is Sclerostin domain-containing protein 1 (SOSTDC1) of Gallus gallus (Chicken).